Here is a 261-residue protein sequence, read N- to C-terminus: Glutamate racemase (261 aa).

Substrate-binding positions include 7–8 and 39–40; these read DS and YG. Cys71 serves as the catalytic Proton donor/acceptor. A substrate-binding site is contributed by 72 to 73; sequence NT. Catalysis depends on Cys184, which acts as the Proton donor/acceptor. 185 to 186 contacts substrate; it reads TH.

This sequence belongs to the aspartate/glutamate racemases family.

It catalyses the reaction L-glutamate = D-glutamate. It functions in the pathway cell wall biogenesis; peptidoglycan biosynthesis. Its function is as follows. Provides the (R)-glutamate required for cell wall biosynthesis. The protein is Glutamate racemase of Aliarcobacter butzleri (strain RM4018) (Arcobacter butzleri).